Here is a 245-residue protein sequence, read N- to C-terminus: 6-carboxyhexanoate--CoA ligase (245 aa).

It belongs to the BioW family. In terms of assembly, homodimer. Requires Mg(2+) as cofactor.

It catalyses the reaction heptanedioate + ATP + CoA = 6-carboxyhexanoyl-CoA + AMP + diphosphate. Its pathway is metabolic intermediate metabolism; pimeloyl-CoA biosynthesis; pimeloyl-CoA from pimelate: step 1/1. Catalyzes the transformation of pimelate into pimeloyl-CoA with concomitant hydrolysis of ATP to AMP. The polypeptide is 6-carboxyhexanoate--CoA ligase (Sulfurihydrogenibium azorense (strain DSM 15241 / OCM 825 / Az-Fu1)).